Consider the following 321-residue polypeptide: UPF0026 protein MJ1312 (321 aa).

One can recognise a Radical SAM core domain in the interval 11 to 236 (RRLGKSLGIN…AIFNEIIGKN (226 aa)). [4Fe-4S] cluster is bound by residues C27, C31, and C34.

Belongs to the UPF0026 family. [4Fe-4S] cluster is required as a cofactor.

The sequence is that of UPF0026 protein MJ1312 from Methanocaldococcus jannaschii (strain ATCC 43067 / DSM 2661 / JAL-1 / JCM 10045 / NBRC 100440) (Methanococcus jannaschii).